We begin with the raw amino-acid sequence, 156 residues long: Large ribosomal subunit protein uL15 (156 aa).

The tract at residues 1–56 (MDLSNLKPAEGATQAGQRLGRGEGSGRGGHSSTRGTKGQSSRSGSGTRPIWFEGGQ) is disordered.

It belongs to the universal ribosomal protein uL15 family. Part of the 50S ribosomal subunit.

In terms of biological role, binds to the 23S rRNA. The sequence is that of Large ribosomal subunit protein uL15 from Salinibacter ruber (strain DSM 13855 / M31).